The chain runs to 383 residues: Micronemal protein 3 (383 aa).

Positions 1–26 are cleaved as a signal peptide; sequence MRGGTSALLHALTFSGAVWMCTPAEA. Positions 27-66 are cleaved as a propeptide — required for proper sorting to micronemes; sequence LPIQKSVQLGSFDKVVPSREVVSESLAPSFAVTETHSSVQ. Residues 67-145 form a lectin-like; required for the binding of host cells region; the sequence is SPSKQETQLC…HPDKSYGGDC (79 aa). Required for proper sorting to micronemes regions lie at residues 146–189, 190–236, and 237–290; these read SCEK…SEDP, CSKR…KRTG, and CHAF…LAEK. The EGF-like domain maps to 186 to 227; it reads SEDPCSKRGNAKCGPNGTCIVVDSVSYTCTCGDGETLVNLPE. 2 cysteine pairs are disulfide-bonded: cysteine 190–cysteine 204 and cysteine 198–cysteine 214. Asparagine 201 carries N-linked (GlcNAc...) asparagine glycosylation. The segment at 294 to 359 is involved in dimerization; it reads EFGISASSCK…HTVTCEKIKH (66 aa).

As to quaternary structure, homodimer; dimerization is likely required for host cell binding but not for trafficking to micronemes. In terms of processing, removal of the propeptide occurs in a post-medial-Golgi compartment. Removal of the propeptide is required for the host cell binding. The presence of propeptide does not affect dimerization. The presence of propeptide does not affect sorting to micronemes.

Its subcellular location is the cytoplasmic vesicle. It is found in the secretory vesicle. The protein localises to the microneme. It localises to the secreted. The protein resides in the golgi apparatus. Its subcellular location is the endoplasmic reticulum. Functionally, adhesin; can bind both the host cells and the parasites. May be involved in parasite invasion by acting as a bridge between the parasite and the host cell. Triggers innate immune responses in mouse macrophages via the TLR11/MyD88/NF-kappa-B pathway. Induces TNF/TNF-alpha secretion in mouse macrophages. Induces secretion of IL6 in mouse and human macrophages likely via different mechanisms. Up-regulates expression of NOS2/iNOS in mouse macrophages. Induces mouse macrophage polarization. This chain is Micronemal protein 3, found in Toxoplasma gondii.